The sequence spans 297 residues: Glycosylphosphatidylinositol anchor biosynthesis protein 11 (297 aa).

The span at Met-1 to Ala-18 shows a compositional bias: low complexity. The interval Met-1–Lys-26 is disordered. 2 helical membrane passes run Ser-44–Ala-64 and Phe-76–Leu-96. Residues Pro-97–Gln-140 form a disordered region. The span at Gly-107–Lys-126 shows a compositional bias: basic and acidic residues. A compositionally biased stretch (basic residues) spans Leu-127–Gln-140. Asn-139 is a glycosylation site (N-linked (GlcNAc...) asparagine). 4 consecutive transmembrane segments (helical) span residues Leu-157–Ala-177, Val-187–Val-207, Val-225–Leu-245, and Ala-253–Cys-273.

This sequence belongs to the PIGF family.

The protein localises to the endoplasmic reticulum membrane. Its pathway is glycolipid biosynthesis; glycosylphosphatidylinositol-anchor biosynthesis. In terms of biological role, acts in the GPI biosynthetic pathway between GlcNAc-PI synthesis and GPI transfer to protein. The sequence is that of Glycosylphosphatidylinositol anchor biosynthesis protein 11 (gpi11) from Aspergillus fumigatus (strain ATCC MYA-4609 / CBS 101355 / FGSC A1100 / Af293) (Neosartorya fumigata).